The sequence spans 197 residues: Ribosomal RNA large subunit methyltransferase E (197 aa).

S-adenosyl-L-methionine is bound by residues G50, W52, D70, D88, and D111. Catalysis depends on K151, which acts as the Proton acceptor.

The protein belongs to the class I-like SAM-binding methyltransferase superfamily. RNA methyltransferase RlmE family.

Its subcellular location is the cytoplasm. The catalysed reaction is uridine(2552) in 23S rRNA + S-adenosyl-L-methionine = 2'-O-methyluridine(2552) in 23S rRNA + S-adenosyl-L-homocysteine + H(+). Specifically methylates the uridine in position 2552 of 23S rRNA at the 2'-O position of the ribose in the fully assembled 50S ribosomal subunit. This chain is Ribosomal RNA large subunit methyltransferase E, found in Syntrophobacter fumaroxidans (strain DSM 10017 / MPOB).